A 95-amino-acid chain; its full sequence is Co-chaperonin GroES (95 aa).

It belongs to the GroES chaperonin family. Heptamer of 7 subunits arranged in a ring. Interacts with the chaperonin GroEL.

It is found in the cytoplasm. Together with the chaperonin GroEL, plays an essential role in assisting protein folding. The GroEL-GroES system forms a nano-cage that allows encapsulation of the non-native substrate proteins and provides a physical environment optimized to promote and accelerate protein folding. GroES binds to the apical surface of the GroEL ring, thereby capping the opening of the GroEL channel. The protein is Co-chaperonin GroES of Cereibacter sphaeroides (strain KD131 / KCTC 12085) (Rhodobacter sphaeroides).